The chain runs to 129 residues: Large ribosomal subunit protein bL12 (129 aa).

This sequence belongs to the bacterial ribosomal protein bL12 family. In terms of assembly, homodimer. Part of the ribosomal stalk of the 50S ribosomal subunit. Forms a multimeric L10(L12)X complex, where L10 forms an elongated spine to which 2 to 4 L12 dimers bind in a sequential fashion. Binds GTP-bound translation factors.

Functionally, forms part of the ribosomal stalk which helps the ribosome interact with GTP-bound translation factors. Is thus essential for accurate translation. This is Large ribosomal subunit protein bL12 from Protochlamydia amoebophila (strain UWE25).